A 123-amino-acid polypeptide reads, in one-letter code: Small ribosomal subunit protein uS12 (123 aa).

Asp-89 is subject to 3-methylthioaspartic acid. Positions Thr-104–Lys-123 are disordered. Residues Ala-113–Lys-123 show a composition bias toward basic residues.

The protein belongs to the universal ribosomal protein uS12 family. In terms of assembly, part of the 30S ribosomal subunit. Contacts proteins S8 and S17. May interact with IF1 in the 30S initiation complex.

Functionally, with S4 and S5 plays an important role in translational accuracy. In terms of biological role, interacts with and stabilizes bases of the 16S rRNA that are involved in tRNA selection in the A site and with the mRNA backbone. Located at the interface of the 30S and 50S subunits, it traverses the body of the 30S subunit contacting proteins on the other side and probably holding the rRNA structure together. The combined cluster of proteins S8, S12 and S17 appears to hold together the shoulder and platform of the 30S subunit. The sequence is that of Small ribosomal subunit protein uS12 from Neisseria gonorrhoeae (strain ATCC 700825 / FA 1090).